A 352-amino-acid chain; its full sequence is 7,8-didemethyl-8-hydroxy-5-deazariboflavin synthase (352 aa).

Residues 35-275 enclose the Radical SAM core domain; it reads ITFSKNAFIP…EDISIQVPPN (241 aa). Positions 49, 53, and 56 each coordinate [4Fe-4S] cluster.

Belongs to the radical SAM superfamily. CofG family. As to quaternary structure, consists of two subunits, CofG and CofH. [4Fe-4S] cluster serves as cofactor.

The catalysed reaction is 5-amino-5-(4-hydroxybenzyl)-6-(D-ribitylimino)-5,6-dihydrouracil + S-adenosyl-L-methionine = 7,8-didemethyl-8-hydroxy-5-deazariboflavin + 5'-deoxyadenosine + L-methionine + NH4(+) + H(+). It participates in cofactor biosynthesis; coenzyme F0 biosynthesis. Catalyzes the radical-mediated synthesis of 7,8-didemethyl-8-hydroxy-5-deazariboflavin from 5-amino-5-(4-hydroxybenzyl)-6-(D-ribitylimino)-5,6-dihydrouracil. In Methanococcus maripaludis (strain C6 / ATCC BAA-1332), this protein is 7,8-didemethyl-8-hydroxy-5-deazariboflavin synthase.